Consider the following 1124-residue polypeptide: Angiopoietin-1 receptor (1124 aa).

An N-terminal signal peptide occupies residues 1–22; sequence MDSLASLVLCGVSLLLSGTVEG. Topologically, residues 23 to 748 are extracellular; the sequence is AMDLILINSL…ADLGGGKMLL (726 aa). A disulfide bond links cysteine 44 and cysteine 102. Residues 44–123 form the Ig-like C2-type 1 domain; that stretch reads CIASGWRPHE…RTMKMRQQAS (80 aa). Asparagine 140 and asparagine 158 each carry an N-linked (GlcNAc...) asparagine glycan. 3 EGF-like domains span residues 210-252, 254-299, and 301-341; these read RCEA…RTCE, ACEL…LQCN, and ACHP…LQCE. Intrachain disulfides connect cysteine 211/cysteine 220, cysteine 224/cysteine 233, cysteine 227/cysteine 240, cysteine 242/cysteine 251, cysteine 255/cysteine 264, cysteine 268/cysteine 274, cysteine 280/cysteine 287, cysteine 289/cysteine 298, cysteine 302/cysteine 311, cysteine 315/cysteine 323, cysteine 317/cysteine 329, cysteine 331/cysteine 340, and cysteine 370/cysteine 424. Positions 350–440 constitute an Ig-like C2-type 2 domain; that stretch reads PKIVDLPDHI…GMVEKPFNIS (91 aa). N-linked (GlcNAc...) asparagine glycans are attached at residues asparagine 399, asparagine 438, asparagine 464, asparagine 560, asparagine 596, asparagine 649, and asparagine 691. 3 consecutive Fibronectin type-III domains span residues 447 to 541, 545 to 636, and 641 to 735; these read PLNA…TASI, PPRG…TLSD, and QPEN…LPES. The helical transmembrane segment at 749 to 769 threads the bilayer; that stretch reads IAILGSAGMTCLTVLLAFLII. Topologically, residues 770–1124 are cytoplasmic; that stretch reads LQLKRANVQR…GIDCSAEEAA (355 aa). The 273-residue stretch at 824–1096 folds into the Protein kinase domain; that stretch reads IKFQDVIGEG…QILVSLNRML (273 aa). ATP contacts are provided by residues 830-838 and lysine 855; that span reads IGEGNFGQV. The residue at position 860 (tyrosine 860) is a Phosphotyrosine; by autocatalysis. Aspartate 964 functions as the Proton acceptor in the catalytic mechanism. 3 positions are modified to phosphotyrosine; by autocatalysis: tyrosine 992, tyrosine 1102, and tyrosine 1108.

This sequence belongs to the protein kinase superfamily. Tyr protein kinase family. Tie subfamily. As to quaternary structure, homodimer. Heterodimer with TIE1. Interacts with ANGPT1, ANGPT2 and ANGPT4. At cell-cell contacts in quiescent cells, forms a signaling complex composed of ANGPT1 plus TEK molecules from two adjoining cells. In the absence of endothelial cell-cell contacts, interaction with ANGPT1 mediates contacts with the extracellular matrix. Interacts with PTPRB; this promotes endothelial cell-cell adhesion. Interacts with DOK2, GRB2, GRB7, GRB14, PIK3R1 and PTPN11/SHP2. Colocalizes with DOK2 at contacts with the extracellular matrix in migrating cells. Interacts (tyrosine phosphorylated) with TNIP2. Interacts (tyrosine phosphorylated) with SHC1 (via SH2 domain). In terms of processing, proteolytic processing leads to the shedding of the extracellular domain (soluble TIE-2 alias sTIE-2). Post-translationally, autophosphorylated on tyrosine residues in response to ligand binding. Autophosphorylation occurs in trans, i.e. one subunit of the dimeric receptor phosphorylates tyrosine residues on the other subunit. Autophosphorylation occurs in a sequential manner, where Tyr-992 in the kinase activation loop is phosphorylated first, followed by autophosphorylation at Tyr-1108 and at additional tyrosine residues. ANGPT1-induced phosphorylation is impaired during hypoxia, due to increased expression of ANGPT2. Phosphorylation is important for interaction with GRB14, PIK3R1 and PTPN11. Phosphorylation at Tyr-1102 is important for interaction with SHC1, GRB2 and GRB7. Phosphorylation at Tyr-1108 is important for interaction with DOK2 and for coupling to downstream signal transduction pathways in endothelial cells. Dephosphorylated by PTPRB. Ubiquitinated. The phosphorylated receptor is ubiquitinated and internalized, leading to its degradation. As to expression, detected in umbilical vein endothelial cells. Proteolytic processing gives rise to a soluble extracellular domain that is detected in blood plasma (at protein level). Predominantly expressed in endothelial cells and their progenitors, the angioblasts. Has been directly found in placenta and lung, with a lower level in umbilical vein endothelial cells, brain and kidney.

It localises to the cell membrane. The protein localises to the cell junction. The protein resides in the focal adhesion. Its subcellular location is the cytoplasm. It is found in the cytoskeleton. It localises to the secreted. It catalyses the reaction L-tyrosyl-[protein] + ATP = O-phospho-L-tyrosyl-[protein] + ADP + H(+). Angiopoietin binding leads to receptor dimerization and activation by autophosphorylation at Tyr-992 on the kinase activation loop. Inhibited by staurosporine, K252a, PP2, damnacanthal, SB203580, CEP-11207, CEP-11981 and CE-245677. Inhibited by triazine, thienopyrimidine and thiazolopyrimidine derivatives. Functionally, tyrosine-protein kinase that acts as a cell-surface receptor for ANGPT1, ANGPT2 and ANGPT4 and regulates angiogenesis, endothelial cell survival, proliferation, migration, adhesion and cell spreading, reorganization of the actin cytoskeleton, but also maintenance of vascular quiescence. Has anti-inflammatory effects by preventing the leakage of pro-inflammatory plasma proteins and leukocytes from blood vessels. Required for normal angiogenesis and heart development during embryogenesis. Required for post-natal hematopoiesis. After birth, activates or inhibits angiogenesis, depending on the context. Inhibits angiogenesis and promotes vascular stability in quiescent vessels, where endothelial cells have tight contacts. In quiescent vessels, ANGPT1 oligomers recruit TEK to cell-cell contacts, forming complexes with TEK molecules from adjoining cells, and this leads to preferential activation of phosphatidylinositol 3-kinase and the AKT1 signaling cascades. In migrating endothelial cells that lack cell-cell adhesions, ANGT1 recruits TEK to contacts with the extracellular matrix, leading to the formation of focal adhesion complexes, activation of PTK2/FAK and of the downstream kinases MAPK1/ERK2 and MAPK3/ERK1, and ultimately to the stimulation of sprouting angiogenesis. ANGPT1 signaling triggers receptor dimerization and autophosphorylation at specific tyrosine residues that then serve as binding sites for scaffold proteins and effectors. Signaling is modulated by ANGPT2 that has lower affinity for TEK, can promote TEK autophosphorylation in the absence of ANGPT1, but inhibits ANGPT1-mediated signaling by competing for the same binding site. Signaling is also modulated by formation of heterodimers with TIE1, and by proteolytic processing that gives rise to a soluble TEK extracellular domain. The soluble extracellular domain modulates signaling by functioning as decoy receptor for angiopoietins. TEK phosphorylates DOK2, GRB7, GRB14, PIK3R1; SHC1 and TIE1. The polypeptide is Angiopoietin-1 receptor (Homo sapiens (Human)).